The primary structure comprises 279 residues: MLNCYLAFPKYDPIIFSVGRFSAHWYGLMYLIGFYFIMWSSIKRYKLISLNKEKIENILYFSFLNALIGGRIGYVIFYKTKEIFFNPYFIFKVWEGGMSFHGGLLGSIISIYYFSKKYNCKFFKISDFLVPLIPFGLGFGRIGNFINGELWGRVNTSFCFTMLFPGSYDEDVKFLLNNPHLQDVFDKYHLLPRHISQLYEMFLEGILLFIILNIFEKKKKPTGYMSGLFLILYGSFRIIAEFFRQPDPQIGLMFNYISLGQILSIPMILYGLILIINSK.

7 consecutive transmembrane segments (helical) span residues 22-42 (SAHWYGLMYLIGFYFIMWSSI), 58-78 (ILYFSFLNALIGGRIGYVIFY), 89-109 (FIFKVWEGGMSFHGGLLGSII), 128-148 (FLVPLIPFGLGFGRIGNFING), 195-215 (ISQLYEMFLEGILLFIILNIF), 223-243 (GYMSGLFLILYGSFRIIAEFF), and 256-276 (YISLGQILSIPMILYGLILII). A 1,2-diacyl-sn-glycero-3-phospho-(1'-sn-glycerol) is bound at residue arginine 141.

The protein belongs to the Lgt family.

The protein localises to the cell membrane. It catalyses the reaction L-cysteinyl-[prolipoprotein] + a 1,2-diacyl-sn-glycero-3-phospho-(1'-sn-glycerol) = an S-1,2-diacyl-sn-glyceryl-L-cysteinyl-[prolipoprotein] + sn-glycerol 1-phosphate + H(+). The protein operates within protein modification; lipoprotein biosynthesis (diacylglyceryl transfer). Functionally, catalyzes the transfer of the diacylglyceryl group from phosphatidylglycerol to the sulfhydryl group of the N-terminal cysteine of a prolipoprotein, the first step in the formation of mature lipoproteins. This Wigglesworthia glossinidia brevipalpis protein is Phosphatidylglycerol--prolipoprotein diacylglyceryl transferase.